The primary structure comprises 201 residues: Small ribosomal subunit protein uS4 (201 aa).

Positions 1–46 (MARYTGPRSRISRRFGEPVMGDSKALQKKNYAPGMHGRNKKRKQSE) are disordered. One can recognise an S4 RNA-binding domain in the interval 92–151 (ARLDNTVYRLGIASSRRAARQLVIHKHIVVNGDVVNIPSYQLKPGDQLGVREKSKSIEAI).

The protein belongs to the universal ribosomal protein uS4 family. Part of the 30S ribosomal subunit. Contacts protein S5. The interaction surface between S4 and S5 is involved in control of translational fidelity.

Functionally, one of the primary rRNA binding proteins, it binds directly to 16S rRNA where it nucleates assembly of the body of the 30S subunit. In terms of biological role, with S5 and S12 plays an important role in translational accuracy. The chain is Small ribosomal subunit protein uS4 from Cytophaga hutchinsonii (strain ATCC 33406 / DSM 1761 / CIP 103989 / NBRC 15051 / NCIMB 9469 / D465).